Reading from the N-terminus, the 468-residue chain is 3-isopropylmalate dehydratase large subunit (468 aa).

Residues Cys347, Cys407, and Cys410 each contribute to the [4Fe-4S] cluster site.

The protein belongs to the aconitase/IPM isomerase family. LeuC type 1 subfamily. Heterodimer of LeuC and LeuD. [4Fe-4S] cluster is required as a cofactor.

The catalysed reaction is (2R,3S)-3-isopropylmalate = (2S)-2-isopropylmalate. Its pathway is amino-acid biosynthesis; L-leucine biosynthesis; L-leucine from 3-methyl-2-oxobutanoate: step 2/4. Functionally, catalyzes the isomerization between 2-isopropylmalate and 3-isopropylmalate, via the formation of 2-isopropylmaleate. The polypeptide is 3-isopropylmalate dehydratase large subunit (Campylobacter jejuni subsp. jejuni serotype O:6 (strain 81116 / NCTC 11828)).